A 237-amino-acid polypeptide reads, in one-letter code: Purine nucleoside phosphorylase DeoD-type (237 aa).

A purine D-ribonucleoside is bound at residue His4. Residues Gly20, Arg24, Arg43, and 87–90 each bind phosphate; that span reads RVGS. A purine D-ribonucleoside contacts are provided by residues 179–181 and 203–204; these read EME and SD. The active-site Proton donor is the Asp204.

The protein belongs to the PNP/UDP phosphorylase family. As to quaternary structure, homohexamer; trimer of homodimers.

The catalysed reaction is a purine D-ribonucleoside + phosphate = a purine nucleobase + alpha-D-ribose 1-phosphate. It carries out the reaction a purine 2'-deoxy-D-ribonucleoside + phosphate = a purine nucleobase + 2-deoxy-alpha-D-ribose 1-phosphate. In terms of biological role, catalyzes the reversible phosphorolytic breakdown of the N-glycosidic bond in the beta-(deoxy)ribonucleoside molecules, with the formation of the corresponding free purine bases and pentose-1-phosphate. This Dichelobacter nodosus (strain VCS1703A) protein is Purine nucleoside phosphorylase DeoD-type.